The primary structure comprises 56 residues: Protein translocase subunit SecE (56 aa).

Residues 30–50 traverse the membrane as a helical segment; sequence VFWLVLFVSIFLGIVDYLMFL.

It belongs to the SecE/SEC61-gamma family. Component of the Sec protein translocase complex. Heterotrimer consisting of SecY, SecE and SecG subunits. The heterotrimers can form oligomers, although 1 heterotrimer is thought to be able to translocate proteins. Interacts with the ribosome. Interacts with SecDF, and other proteins may be involved. Interacts with SecA.

The protein resides in the cell inner membrane. Functionally, essential subunit of the Sec protein translocation channel SecYEG. Clamps together the 2 halves of SecY. May contact the channel plug during translocation. This Borreliella burgdorferi (strain ATCC 35210 / DSM 4680 / CIP 102532 / B31) (Borrelia burgdorferi) protein is Protein translocase subunit SecE.